Here is a 594-residue protein sequence, read N- to C-terminus: Adenine deaminase 1 (594 aa).

Belongs to the metallo-dependent hydrolases superfamily. Adenine deaminase family. Mn(2+) serves as cofactor.

It catalyses the reaction adenine + H2O + H(+) = hypoxanthine + NH4(+). This Latilactobacillus sakei subsp. sakei (strain 23K) (Lactobacillus sakei subsp. sakei) protein is Adenine deaminase 1.